Here is a 307-residue protein sequence, read N- to C-terminus: Nucleotide-binding protein Achl_1824 (307 aa).

30 to 37 (GMSGAGRS) provides a ligand contact to ATP. Residue 81–84 (DVRS) coordinates GTP.

It belongs to the RapZ-like family.

In terms of biological role, displays ATPase and GTPase activities. The sequence is that of Nucleotide-binding protein Achl_1824 from Pseudarthrobacter chlorophenolicus (strain ATCC 700700 / DSM 12829 / CIP 107037 / JCM 12360 / KCTC 9906 / NCIMB 13794 / A6) (Arthrobacter chlorophenolicus).